A 217-amino-acid chain; its full sequence is Outer-membrane lipoprotein LolB (217 aa).

The N-terminal stretch at 1 to 20 is a signal peptide; that stretch reads MSRAVRTLALGGLVLVGLSA. The N-palmitoyl cysteine moiety is linked to residue Cys-21. Cys-21 is lipidated: S-diacylglycerol cysteine.

The protein belongs to the LolB family. In terms of assembly, monomer.

It is found in the cell outer membrane. Plays a critical role in the incorporation of lipoproteins in the outer membrane after they are released by the LolA protein. This Xanthomonas euvesicatoria pv. vesicatoria (strain 85-10) (Xanthomonas campestris pv. vesicatoria) protein is Outer-membrane lipoprotein LolB.